The sequence spans 930 residues: Isoleucine--tRNA ligase (930 aa).

Residues 57 to 67 (PYANGNIHVGH) carry the 'HIGH' region motif. Glutamate 554 serves as a coordination point for L-isoleucyl-5'-AMP. The 'KMSKS' region motif lies at 595-599 (KMSKS). Lysine 598 provides a ligand contact to ATP. Positions 888, 891, 908, and 911 each coordinate Zn(2+).

The protein belongs to the class-I aminoacyl-tRNA synthetase family. IleS type 1 subfamily. Monomer. The cofactor is Zn(2+).

Its subcellular location is the cytoplasm. It catalyses the reaction tRNA(Ile) + L-isoleucine + ATP = L-isoleucyl-tRNA(Ile) + AMP + diphosphate. In terms of biological role, catalyzes the attachment of isoleucine to tRNA(Ile). As IleRS can inadvertently accommodate and process structurally similar amino acids such as valine, to avoid such errors it has two additional distinct tRNA(Ile)-dependent editing activities. One activity is designated as 'pretransfer' editing and involves the hydrolysis of activated Val-AMP. The other activity is designated 'posttransfer' editing and involves deacylation of mischarged Val-tRNA(Ile). The polypeptide is Isoleucine--tRNA ligase (Streptococcus mutans serotype c (strain ATCC 700610 / UA159)).